The following is a 1007-amino-acid chain: Zinc finger CCCH domain-containing protein 4 (1007 aa).

The Helicase ATP-binding domain occupies 28-192; sequence VEKVKGNRVT…FRDLGRGERV (165 aa). 41–48 contacts ATP; the sequence is GDTGCGKS. The DEAH box motif lies at 139–142; the sequence is DEIH. The Helicase C-terminal domain maps to 250 to 420; that stretch reads LIHRLLLHIH…EQVLMICCAE (171 aa). 2 consecutive C3H1-type zinc fingers follow at residues 723-750 and 751-778; these read ALENEMCVFFLNGSCNRGDTCHFSHSSR and APRPICKFFLTLQGCRNGNSCSFSHDSG.

This is Zinc finger CCCH domain-containing protein 4 from Oryza sativa subsp. japonica (Rice).